Reading from the N-terminus, the 743-residue chain is Phosphoribosylformylglycinamidine synthase subunit PurL (743 aa).

Residue His-50 is part of the active site. 2 residues coordinate ATP: Tyr-53 and Lys-92. Position 94 (Glu-94) interacts with Mg(2+). Substrate-binding positions include 95–98 (SHNH) and Arg-117. His-96 (proton acceptor) is an active-site residue. Asp-118 serves as a coordination point for Mg(2+). Gln-241 is a binding site for substrate. Residue Asp-269 participates in Mg(2+) binding. 313-315 (ESQ) is a binding site for substrate. Asp-494 and Gly-531 together coordinate ATP. A Mg(2+)-binding site is contributed by Asn-532. Substrate is bound at residue Ser-534.

Belongs to the FGAMS family. In terms of assembly, monomer. Part of the FGAM synthase complex composed of 1 PurL, 1 PurQ and 2 PurS subunits.

It localises to the cytoplasm. The enzyme catalyses N(2)-formyl-N(1)-(5-phospho-beta-D-ribosyl)glycinamide + L-glutamine + ATP + H2O = 2-formamido-N(1)-(5-O-phospho-beta-D-ribosyl)acetamidine + L-glutamate + ADP + phosphate + H(+). Its pathway is purine metabolism; IMP biosynthesis via de novo pathway; 5-amino-1-(5-phospho-D-ribosyl)imidazole from N(2)-formyl-N(1)-(5-phospho-D-ribosyl)glycinamide: step 1/2. Its function is as follows. Part of the phosphoribosylformylglycinamidine synthase complex involved in the purines biosynthetic pathway. Catalyzes the ATP-dependent conversion of formylglycinamide ribonucleotide (FGAR) and glutamine to yield formylglycinamidine ribonucleotide (FGAM) and glutamate. The FGAM synthase complex is composed of three subunits. PurQ produces an ammonia molecule by converting glutamine to glutamate. PurL transfers the ammonia molecule to FGAR to form FGAM in an ATP-dependent manner. PurS interacts with PurQ and PurL and is thought to assist in the transfer of the ammonia molecule from PurQ to PurL. This is Phosphoribosylformylglycinamidine synthase subunit PurL from Rhizobium meliloti (strain 1021) (Ensifer meliloti).